Consider the following 222-residue polypeptide: 7-cyano-7-deazaguanine synthase (222 aa).

14 to 24 (FSGGQDSTTCL) is an ATP binding site. Zn(2+)-binding residues include cysteine 192, cysteine 201, cysteine 204, and cysteine 207.

This sequence belongs to the QueC family. Homodimer. Zn(2+) is required as a cofactor.

It carries out the reaction 7-carboxy-7-deazaguanine + NH4(+) + ATP = 7-cyano-7-deazaguanine + ADP + phosphate + H2O + H(+). The protein operates within purine metabolism; 7-cyano-7-deazaguanine biosynthesis. Catalyzes the ATP-dependent conversion of 7-carboxy-7-deazaguanine (CDG) to 7-cyano-7-deazaguanine (preQ(0)). The sequence is that of 7-cyano-7-deazaguanine synthase from Clostridium acetobutylicum (strain ATCC 824 / DSM 792 / JCM 1419 / IAM 19013 / LMG 5710 / NBRC 13948 / NRRL B-527 / VKM B-1787 / 2291 / W).